Consider the following 351-residue polypeptide: uncharacterized protein (351 aa).

It belongs to the bacterial luciferase oxidoreductase family.

This is an uncharacterized protein from Sinorhizobium fredii (strain NBRC 101917 / NGR234).